The primary structure comprises 3029 residues: Polycystin-1-related protein (3029 aa).

Positions 1 to 21 (MAKHLYLAFSLILVPFLVSKA) are cleaved as a signal peptide. The Extracellular segment spans residues 22-1685 (KQTSNGEVPW…RDTDKLKNSP (1664 aa)). Positions 29-121 (VPWLVGCYRY…KNVASVYSTA (93 aa)) constitute a WSC domain. PKD domains are found at residues 364 to 450 (EGHC…IKGV) and 546 to 634 (DHLF…PECY). One can recognise an REJ domain in the interval 633–1476 (CYTRGVAIVG…NPYFSDMNHT (844 aa)). 3 disordered regions span residues 754–773 (RKGP…HPDE), 909–931 (CPSD…SNSP), and 989–1051 (TSAI…PNKP). The span at 918–931 (VTPSTTPMTDSNSP) shows a compositional bias: polar residues. A compositionally biased stretch (acidic residues) spans 997–1013 (SGDVDDDEVNNDNDDDS). The span at 1020 to 1047 (TLPTPLSMTNANSVNKPIITTDTPSFNK) shows a compositional bias: polar residues. Residues 1525–1671 (RNVHVINQTA…GFIQPPNSLH (147 aa)) form the GAIN-B domain. Intrachain disulfides connect Cys1624–Cys1651 and Cys1639–Cys1653. The GPS stretch occupies residues 1624-1671 (CFYWNKRGKHWASDGCRLEKSINHTLVCRCNHLTAFSGGFIQPPNSLH). A helical transmembrane segment spans residues 1686-1706 (LTMVLVISILVMYFLLLGFCV). Residues 1707-1895 (KADRHDKKKL…SYSRFTRAQR (189 aa)) are Cytoplasmic-facing. Positions 1733–1851 (SRFQLSVQTG…GNGKVECELF (119 aa)) constitute a PLAT domain. A helical membrane pass occupies residues 1896 to 1916 (LSCCLSLLLSFLCVNIAWYRP). Over 1917–1933 (KIEVTEVLGVLDVSANS) the chain is Extracellular. The chain crosses the membrane as a helical span at residues 1934 to 1954 (IMIGVLGSLMVLPVNFLWIFF). The Cytoplasmic portion of the chain corresponds to 1955–2101 (FRYSRRSLSR…YRSKFSLPHG (147 aa)). A helical membrane pass occupies residues 2102–2122 (FVYVAWFGCLITGTVTSAITI). Topologically, residues 2123-2140 (WYGLSFGWDLSVHWFQSL) are extracellular. A helical transmembrane segment spans residues 2141–2161 (VFSLLESLLLSQPIMVLAFIF). Residues 2162 to 2250 (YMSHKTKSGK…SLKNRVLRNY (89 aa)) lie on the Cytoplasmic side of the membrane. The helical transmembrane segment at 2251–2271 (VVELFVFIMFFVVTCALVFSV) threads the bilayer. Residues 2272 to 2462 (ADPDVYHLNQ…GYSYFIRFTK (191 aa)) lie on the Extracellular side of the membrane. The chain crosses the membrane as a helical span at residues 2463 to 2483 (LLFVVFFLYLLQHEFFLALKM). At 2484-2496 (TFSYFTNFWRVYQ) the chain is on the cytoplasmic side. A helical transmembrane segment spans residues 2497–2517 (LLTIAISSACIVSYIHWSLSL). At 2518–2538 (YALLREVETERQSRVFYLSRQ) the chain is on the extracellular side. A helical membrane pass occupies residues 2539-2559 (ISWSQGFLQASYSLLLFLLLI). At 2560-2586 (RCLHLLRPFRFVRHFGRILSTSISSLL) the chain is on the cytoplasmic side. Residues 2587–2607 (ACWVFGFILVVAFAHPGYLLF) form a helical membrane-spanning segment. Residues 2608–2651 (GSVHSSFKSFGDAFLLVTSFFRLEGVARYQDFALEEQTLLLSTY) lie on the Extracellular side of the membrane. The helical transmembrane segment at 2652–2672 (FALFLIGFCVIVRGSTAAVVL) threads the bilayer. Residues 2673-3029 (HGIRCLGKRR…PVGQRVVSAM (357 aa)) are Cytoplasmic-facing. Residues 2704–2726 (KKPKKPRPNSVSDLEETDDEDDL) form a disordered region. The segment covering 2716–2726 (DLEETDDEDDL) has biased composition (acidic residues).

This sequence belongs to the polycystin family. Heterodimer of 2 chains generated by proteolytic processing; the large extracellular N-terminal fragment and the membrane-bound C-terminal fragment predominantly remain associated and non-covalently linked. In terms of processing, autoproteolytically processed at the GPS region of the GAIN-B domain; this cleavage modulates receptor activity. As to expression, component of the acid-insoluble and acid-soluble organic matrix of the aragonitic skeleton (at protein level).

The protein resides in the membrane. This is Polycystin-1-related protein from Acropora millepora (Staghorn coral).